A 681-amino-acid polypeptide reads, in one-letter code: Envelope glycoprotein (681 aa).

An N-terminal signal peptide occupies residues 1–18 (MKTTCLFISLILIQGIKT). The Extracellular portion of the chain corresponds to 19-648 (LPILEIASNN…GLGGKWWTSD (630 aa)). The receptor-binding stretch occupies residues 38-188 (SGTLQKTEDV…FSRQGQGYRH (151 aa)). Asn94, Asn171, Asn190, Asn202, Asn207, Asn219, Asn223, and Asn255 each carry an N-linked (GlcNAc...) asparagine; by host glycan. The interval 223–351 (NQTCAPSKIP…STNNTSKNNF (129 aa)) is disordered. Residues 244-259 (PTSTPTDATTLNTTDP) are compositionally biased toward low complexity. A mucin-like region region spans residues 277–455 (EPYTTSDAVT…PFLDGLINAP (179 aa)). Polar residues-rich tracts occupy residues 278–290 (PYTT…KQGL) and 308–341 (EGNN…TTAI). Residues Asn310, Asn323, Asn326, Asn337, Asn344, Asn345, Asn350, Asn360, Asn389, Asn397, Asn408, and Asn487 are each glycosylated (N-linked (GlcNAc...) asparagine; by host). Positions 342 to 351 (STNNTSKNNF) are enriched in low complexity. Residues 366-414 (TQSTATENEQTSAPSKTTLPPTGNLTTAKSTNNTKGPTTTAPNMTNGHL) are compositionally biased toward polar residues. Positions 366–425 (TQSTATENEQTSAPSKTTLPPTGNLTTAKSTNNTKGPTTTAPNMTNGHLTSPSPTPNPTT) are disordered. Residues 529-549 (GLSWIPFFGPGIEGLYTAGLI) are fusion peptide. N-linked (GlcNAc...) asparagine; by host glycans are attached at residues Asn564 and Asn619. A helical transmembrane segment spans residues 649–669 (WGVLTNLGILLLLSIAVLIAL). Residues 670–681 (SCICRIFTKYIG) are Cytoplasmic-facing. S-palmitoyl cysteine; by host attachment occurs at residues Cys671 and Cys673.

Belongs to the filoviruses glycoprotein family. In terms of assembly, homotrimer; each monomer consists of a GP1 and a GP2 subunit linked by disulfide bonds. The resulting peplomers (GP1,2) protrude from the virus surface as spikes. GP1,2 interacts with human CD209 and CLEC4M (collectively referred to as DC-SIGN(R)). Asialoglycoprotein receptor (ASGP-R) may be a liver-specific receptor for GP1,2. Members of the Tyro3 receptor tyrosine kinase family may be cell entry factors interacting with GP1,2. Post-translationally, N-glycosylated. O-glycosylated in the mucin-like region. In terms of processing, specific enzymatic cleavages in vivo yield mature proteins. The precursor is processed into GP1 and GP2 by host cell furin in the trans Golgi, and maybe by other host proteases, to yield the mature GP1 and GP2 proteins. The cleavage site corresponds to the furin optimal cleavage sequence [KR]-X-[KR]-R. Post-translationally, GP1 is phosphorylated on serine residues between residues 260 and 273.

It localises to the virion membrane. It is found in the host cell membrane. In terms of biological role, GP1 is responsible for binding to the receptor(s) on target cells. Interacts with CD209/DC-SIGN and CLEC4M/DC-SIGNR which act as cofactors for virus entry into the host cell. Binding to CD209 and CLEC4M, which are respectively found on dendritic cells (DCs), and on endothelial cells of liver sinusoids and lymph node sinuses, facilitate infection of macrophages and endothelial cells. These interactions not only facilitate virus cell entry, but also allow capture of viral particles by DCs and subsequent transmission to susceptible cells without DCs infection (trans infection). Functionally, GP2 acts as a class I viral fusion protein. Under the current model, the protein has at least 3 conformational states: pre-fusion native state, pre-hairpin intermediate state, and post-fusion hairpin state. During viral and target cell membrane fusion, the coiled coil regions (heptad repeats) assume a trimer-of-hairpins structure, positioning the fusion peptide in close proximity to the C-terminal region of the ectodomain. The formation of this structure appears to drive apposition and subsequent fusion of viral and target cell membranes. Responsible for penetration of the virus into the cell cytoplasm by mediating the fusion of the membrane of the endocytosed virus particle with the endosomal membrane. Low pH in endosomes induces an irreversible conformational change in GP2, releasing the fusion hydrophobic peptide. The sequence is that of Envelope glycoprotein (GP) from Lake Victoria marburgvirus (strain Popp-67) (MARV).